The primary structure comprises 344 residues: MTSNFSQATLQLCYENVNASCIKTPYSPGLRVLLYMVFGFGAVLAVCGNLLVVISVLHFKQLHSPANFLIASLASADFLVGISVMPFSMVRSIESCWYFGDTFCSLHSCCDAAFCYSSLFHLCFISVDRYIAVTEPLVYPTKFTMSVSGICISISWILPLVYSSAVFYTGISATGIENLVSALNCVGGCQVAINQDWVLISFLLFFIPTLVMIILYSKIFLVAKQQAVKIETSISGSKGESSLESHKARVAKRERKAAKTLGVTVMAFMVSWLPYTIDTLIDAFMGFITPAYVYEICGWIAYYNSAMNPLIYAFFYPWFRKAIKLILSGKILKGHSSTTSLFSE.

The Extracellular segment spans residues Met1–Leu33. N-linked (GlcNAc...) asparagine glycosylation is found at Asn4 and Asn18. Disulfide bonds link Cys21–Cys185 and Cys104–Cys189. A helical membrane pass occupies residues Leu34–Ile54. Over Ser55–Asn67 the chain is Cytoplasmic. Residues Phe68–Ser88 form a helical membrane-spanning segment. Over Met89–Thr102 the chain is Extracellular. Residues Phe103–Val127 form a helical membrane-spanning segment. The Cytoplasmic segment spans residues Asp128 to Ser146. Residues Val147–Phe167 traverse the membrane as a helical segment. The Extracellular portion of the chain corresponds to Tyr168–Asp196. The chain crosses the membrane as a helical span at residues Trp197–Ser217. Topologically, residues Lys218 to Lys256 are cytoplasmic. Residues Ala257 to Ile277 traverse the membrane as a helical segment. The Extracellular segment spans residues Asp278–Glu295. Residues Ile296–Phe319 form a helical membrane-spanning segment. The Cytoplasmic segment spans residues Arg320 to Glu344.

Belongs to the G-protein coupled receptor 1 family.

It is found in the cell membrane. In terms of biological role, olfactory receptor activated by trace amines. Trace amine compounds are enriched in animal body fluids and act on trace amine-associated receptors (TAARs) to elicit both intraspecific and interspecific innate behaviors. Ligand-binding causes a conformation change that triggers signaling via G(s)-class of G alpha proteins (GNAL or GNAS). The chain is Trace amine-associated receptor 8b from Rattus norvegicus (Rat).